The chain runs to 187 residues: Elongation factor P (187 aa).

It belongs to the elongation factor P family.

It is found in the cytoplasm. The protein operates within protein biosynthesis; polypeptide chain elongation. Its function is as follows. Involved in peptide bond synthesis. Stimulates efficient translation and peptide-bond synthesis on native or reconstituted 70S ribosomes in vitro. Probably functions indirectly by altering the affinity of the ribosome for aminoacyl-tRNA, thus increasing their reactivity as acceptors for peptidyl transferase. The sequence is that of Elongation factor P from Pseudarthrobacter chlorophenolicus (strain ATCC 700700 / DSM 12829 / CIP 107037 / JCM 12360 / KCTC 9906 / NCIMB 13794 / A6) (Arthrobacter chlorophenolicus).